A 900-amino-acid polypeptide reads, in one-letter code: Alanine--tRNA ligase (900 aa).

Residues histidine 604, histidine 608, cysteine 708, and histidine 712 each contribute to the Zn(2+) site.

The protein belongs to the class-II aminoacyl-tRNA synthetase family. Requires Zn(2+) as cofactor.

It localises to the cytoplasm. The enzyme catalyses tRNA(Ala) + L-alanine + ATP = L-alanyl-tRNA(Ala) + AMP + diphosphate. Catalyzes the attachment of alanine to tRNA(Ala) in a two-step reaction: alanine is first activated by ATP to form Ala-AMP and then transferred to the acceptor end of tRNA(Ala). Also edits incorrectly charged Ser-tRNA(Ala) and Gly-tRNA(Ala) via its editing domain. The polypeptide is Alanine--tRNA ligase (Saccharolobus islandicus (strain M.14.25 / Kamchatka #1) (Sulfolobus islandicus)).